Reading from the N-terminus, the 647-residue chain is XK-related protein 4 (647 aa).

Over residues Met-1–Ser-15 the composition is skewed to basic and acidic residues. A disordered region spans residues Met-1–Ala-44. Residues Pro-21–Val-31 show a composition bias toward polar residues. A run of 2 helical transmembrane segments spans residues Trp-112–Val-132 and Trp-142–Phe-162. Ser-197 is subject to Phosphoserine. The interval Ser-197 to Gly-238 is disordered. A compositionally biased stretch (polar residues) spans Ser-207–Thr-236. 8 helical membrane-spanning segments follow: residues Cys-245–Trp-265, His-303–Val-323, Leu-328–Ala-348, Lys-362–Ala-382, Val-393–His-415, Trp-425–Val-445, Leu-454–Leu-474, and Phe-484–Leu-504.

This sequence belongs to the XK family. Homodimer; homodimerization takes place upon caspase cleavage. Interacts with the processed C-terminus of XRCC4 (protein XRCC4, C-terminus); interaction promotes the phospholipid scramblase activity. Undergoes proteolytic processing by caspase-3 (CASP3), caspase-6 (CASP6) and caspase-7 (CASP7) to generate the XK-related protein 4, processed form, leading to its activation. As to expression, highly expressed in expressed in the brain; weakly expressed in the spleen, thymus, uterus, blood vessels and fetus.

The protein localises to the cell membrane. It carries out the reaction a 1,2-diacyl-sn-glycero-3-phospho-L-serine(in) = a 1,2-diacyl-sn-glycero-3-phospho-L-serine(out). Its activity is regulated as follows. Phospholipid scramblase activity is activated upon caspase cleavage to generate the XK-related protein 4, processed form. Does not act prior the onset of apoptosis. Homodimerizes upon caspase cleavage. Phospholipid scramblase activity is activated following interaction with the processed C-terminus of XRCC4 (protein XRCC4, C-terminus). In terms of biological role, phospholipid scramblase that promotes phosphatidylserine exposure on apoptotic cell surface. Phosphatidylserine is a specific marker only present at the surface of apoptotic cells and acts as a specific signal for engulfment. The polypeptide is XK-related protein 4 (Mus musculus (Mouse)).